Here is a 334-residue protein sequence, read N- to C-terminus: Formamidase (334 aa).

Residues 14 to 260 enclose the CN hydrolase domain; that stretch reads FLVAAIQFPV…WEIVTGEIYP (247 aa). The active-site Proton acceptor is the Glu60. Lys133 acts as the Proton donor in catalysis. The active-site Nucleophile is the Cys166.

Belongs to the carbon-nitrogen hydrolase superfamily. Aliphatic amidase family.

It carries out the reaction formamide + H2O = formate + NH4(+). Functionally, is an aliphatic amidase with a restricted substrate specificity, as it only hydrolyzes formamide. This is Formamidase from Helicobacter pylori (strain P12).